The sequence spans 505 residues: Trans-cinnamate 4-monooxygenase (505 aa).

Residues 3-23 (LLLIEKTLVALFAAIIGAILI) traverse the membrane as a helical segment. Residues 213–218 (RSRLAQ) and alanine 306 contribute to the (E)-cinnamate site. Cysteine 447 is a heme binding site.

The protein belongs to the cytochrome P450 family. Requires heme as cofactor.

The protein resides in the membrane. It carries out the reaction (E)-cinnamate + reduced [NADPH--hemoprotein reductase] + O2 = (E)-4-coumarate + oxidized [NADPH--hemoprotein reductase] + H2O + H(+). Its pathway is phenylpropanoid metabolism; trans-4-coumarate biosynthesis; trans-4-coumarate from trans-cinnamate: step 1/1. Its activity is regulated as follows. Inactivated by piperonylic acid. Its function is as follows. Catalyzes the first oxidative step of the phenylpropanoid pathway in higher plants by transforming trans-cinnamate into p-coumarate. The compounds formed by this pathway are essential components for lignification, pollination, and defense against ultraviolet light, predators and pathogens. Can also use 2-naphthoic acid as substrate. The chain is Trans-cinnamate 4-monooxygenase from Helianthus tuberosus (Jerusalem artichoke).